The following is a 578-amino-acid chain: Probable lysosomal cobalamin transporter (578 aa).

2 consecutive transmembrane segments (helical) span residues 8-28 (LIWV…SVFI) and 46-66 (IFAI…VALV). A glycan (N-linked (GlcNAc...) asparagine) is linked at Asn70. 2 consecutive transmembrane segments (helical) span residues 95–115 (VVYY…IPFT) and 145–165 (TITF…VPVA). An N-linked (GlcNAc...) asparagine glycan is attached at Asn168. Helical transmembrane passes span 188–208 (ALTF…VLYT), 312–332 (LLGG…MLLT), 347–367 (GYIL…VQAA), 375–395 (VIFT…IAIV), 419–439 (LTTA…SMVV), and 506–526 (FFGV…LIVV). The tract at residues 539–578 (RQMDEDAEEAEEEGLLASTGRRLDTAWQDITGRSNRQRDS) is disordered. Residues 540 to 552 (QMDEDAEEAEEEG) show a composition bias toward acidic residues.

It belongs to the LIMR family. LMBRD1 subfamily.

It is found in the lysosome membrane. Probable lysosomal cobalamin transporter. Required to export cobalamin from lysosomes allowing its conversion to cofactors. The sequence is that of Probable lysosomal cobalamin transporter from Aspergillus terreus (strain NIH 2624 / FGSC A1156).